The sequence spans 135 residues: Ribonuclease P protein component (135 aa).

Belongs to the RnpA family. In terms of assembly, consists of a catalytic RNA component (M1 or rnpB) and a protein subunit.

The catalysed reaction is Endonucleolytic cleavage of RNA, removing 5'-extranucleotides from tRNA precursor.. RNaseP catalyzes the removal of the 5'-leader sequence from pre-tRNA to produce the mature 5'-terminus. It can also cleave other RNA substrates such as 4.5S RNA. The protein component plays an auxiliary but essential role in vivo by binding to the 5'-leader sequence and broadening the substrate specificity of the ribozyme. The polypeptide is Ribonuclease P protein component (Pseudomonas paraeruginosa (strain DSM 24068 / PA7) (Pseudomonas aeruginosa (strain PA7))).